The primary structure comprises 510 residues: Light-independent protochlorophyllide reductase subunit B (510 aa).

D36 is a binding site for [4Fe-4S] cluster. D296 (proton donor) is an active-site residue. 431–432 (GM) provides a ligand contact to substrate.

The protein belongs to the ChlB/BchB/BchZ family. Protochlorophyllide reductase is composed of three subunits; ChlL, ChlN and ChlB. Forms a heterotetramer of two ChlB and two ChlN subunits. It depends on [4Fe-4S] cluster as a cofactor.

Its subcellular location is the plastid. The protein resides in the chloroplast. It catalyses the reaction chlorophyllide a + oxidized 2[4Fe-4S]-[ferredoxin] + 2 ADP + 2 phosphate = protochlorophyllide a + reduced 2[4Fe-4S]-[ferredoxin] + 2 ATP + 2 H2O. Its pathway is porphyrin-containing compound metabolism; chlorophyll biosynthesis (light-independent). Its function is as follows. Component of the dark-operative protochlorophyllide reductase (DPOR) that uses Mg-ATP and reduced ferredoxin to reduce ring D of protochlorophyllide (Pchlide) to form chlorophyllide a (Chlide). This reaction is light-independent. The NB-protein (ChlN-ChlB) is the catalytic component of the complex. This is Light-independent protochlorophyllide reductase subunit B from Chlorokybus atmophyticus (Soil alga).